The following is a 147-amino-acid chain: Calmodulin (147 aa).

EF-hand domains follow at residues 8–43 (EQIA…LGLS), 44–79 (PSEA…QLKC), 81–116 (DSEQ…IGEK), and 120–147 (AEVD…LLSK). Ca(2+) is bound by residues Asp-21, Asp-23, Ser-25, Ser-27, Glu-32, Asp-57, Asp-59, Asn-61, Glu-68, Asp-94, Asn-96, Asp-98, and Glu-105.

It belongs to the calmodulin family.

Functionally, calmodulin mediates the control of a large number of enzymes, ion channels and other proteins by Ca(2+). Among the enzymes to be stimulated by the calmodulin-Ca(2+) complex are a number of protein kinases and phosphatases. In Kluyveromyces lactis (strain ATCC 8585 / CBS 2359 / DSM 70799 / NBRC 1267 / NRRL Y-1140 / WM37) (Yeast), this protein is Calmodulin (CMD1).